A 120-amino-acid chain; its full sequence is Large ribosomal subunit protein bL19c (120 aa).

This sequence belongs to the bacterial ribosomal protein bL19 family.

The protein localises to the plastid. It localises to the chloroplast. In Thalassiosira pseudonana (Marine diatom), this protein is Large ribosomal subunit protein bL19c.